We begin with the raw amino-acid sequence, 141 residues long: 16 kDa protein (141 aa).

The segment at 95–116 (ESSSATRKKSHNSKNSKKKFKE) is disordered. A compositionally biased stretch (basic residues) spans 100 to 113 (TRKKSHNSKNSKKK).

This Tobacco rattle virus (strain PSG) protein is 16 kDa protein.